We begin with the raw amino-acid sequence, 2604 residues long: BEACH domain-containing protein B (2604 aa).

Positions 1761–1912 constitute a BEACH-type PH domain; that stretch reads VGTSEVLTSV…NAKEVGMLIV (152 aa). The region spanning 1936–2226 is the BEACH domain; sequence DRRIAMEMAE…QIFRKKHPRR (291 aa). 6 WD repeats span residues 2254 to 2293, 2368 to 2407, 2433 to 2474, 2476 to 2515, 2516 to 2557, and 2558 to 2596; these read HSPSAVLYVGVVDSNIVLVNQGLTLSVKIWLTTQLHSGGN, HHKDVVSCVAVTADSTILATGSYDTTVMVWDILRMRTPEK, GHDD…RSLK, PSGSAVSKLAASHHGRIVLYGDDDLSLHLYSINGKHLASS, ESNG…KRYN, and GAGKIITSLTVTQEECFLAGTKDGALLVYSIENPQHRKP.

May be involved in the suppression of BCHC1 activity. In Arabidopsis thaliana (Mouse-ear cress), this protein is BEACH domain-containing protein B.